Consider the following 131-residue polypeptide: Phosphomevalonate dehydratase small subunit (131 aa).

Ser62 (proton acceptor) is an active-site residue.

Belongs to the AcnX type II small subunit family. As to quaternary structure, heterodimer composed of a large subunit (PMDh-L) and a small subunit (PMDh-S).

It carries out the reaction (R)-5-phosphomevalonate = (2E)-3-methyl-5-phosphooxypent-2-enoate + H2O. Its pathway is isoprenoid biosynthesis; isopentenyl diphosphate biosynthesis via mevalonate pathway. In terms of biological role, component of a hydro-lyase that catalyzes the dehydration of mevalonate 5-phosphate (MVA5P) to form trans-anhydromevalonate 5-phosphate (tAHMP). Involved in the archaeal mevalonate (MVA) pathway, which provides fundamental precursors for isoprenoid biosynthesis, such as isopentenyl diphosphate (IPP) and dimethylallyl diphosphate (DMAPP). In Methanothermobacter thermautotrophicus (strain ATCC 29096 / DSM 1053 / JCM 10044 / NBRC 100330 / Delta H) (Methanobacterium thermoautotrophicum), this protein is Phosphomevalonate dehydratase small subunit.